The following is a 304-amino-acid chain: Quinolinate synthase (304 aa).

Positions 23 and 40 each coordinate iminosuccinate. C85 contacts [4Fe-4S] cluster. Residues 111–113 (YIN) and S128 each bind iminosuccinate. C171 lines the [4Fe-4S] cluster pocket. Iminosuccinate is bound by residues 197-199 (HPE) and T214. Residue C259 coordinates [4Fe-4S] cluster.

This sequence belongs to the quinolinate synthase family. Type 2 subfamily. [4Fe-4S] cluster is required as a cofactor.

It is found in the cytoplasm. It carries out the reaction iminosuccinate + dihydroxyacetone phosphate = quinolinate + phosphate + 2 H2O + H(+). It functions in the pathway cofactor biosynthesis; NAD(+) biosynthesis; quinolinate from iminoaspartate: step 1/1. Functionally, catalyzes the condensation of iminoaspartate with dihydroxyacetone phosphate to form quinolinate. The sequence is that of Quinolinate synthase from Clostridioides difficile (strain 630) (Peptoclostridium difficile).